Consider the following 398-residue polypeptide: Ubiquitin carboxyl-terminal hydrolase 17-like protein 6 (398 aa).

Residues Ala-80–Lys-375 enclose the USP domain. Cys-89 serves as the catalytic Nucleophile. The active-site Proton acceptor is the His-334.

Belongs to the peptidase C19 family. USP17 subfamily.

Its subcellular location is the nucleus. The protein resides in the cytoplasm. The catalysed reaction is Thiol-dependent hydrolysis of ester, thioester, amide, peptide and isopeptide bonds formed by the C-terminal Gly of ubiquitin (a 76-residue protein attached to proteins as an intracellular targeting signal).. Functionally, deubiquitinating enzyme that removes conjugated ubiquitin from specific proteins to regulate different cellular processes that may include cell proliferation, progression through the cell cycle, cell migration, and the cellular response to viral infection. Seems to be non-functional in the regulation of apoptosis. In Homo sapiens (Human), this protein is Ubiquitin carboxyl-terminal hydrolase 17-like protein 6 (USP17L6P).